Reading from the N-terminus, the 1070-residue chain is Potassium/chloride cotransporter 3 (1070 aa).

The next 15 membrane-spanning stretches (helical) occupy residues 92–112, 114–134, 142–162, 174–194, 196–216, 228–248, 251–271, 400–420, 433–453, 473–493, 534–554, 557–577, 600–620, 791–811, and 827–847; these read GVML…TMFI, LFWV…AICC, ISLS…YFII, VGIL…VGGV, VILM…LHDT, LYGT…VKFV, LAPV…GGGI, FFML…GTNM, VGTI…AILF, TMVV…GAFL, PFLG…LGAV, IAEV…LIAV, LLGA…LACI, LVLF…LIVT, and FIDI…AYLL.

In terms of tissue distribution, expressed in the amphid sheath glia and the cephalic sheath glia. Also expressed in the inner labial and outer labial sheath and socket glia and as well as phasmid sheath glia.

It is found in the cell membrane. Its function is as follows. Probable potassium/chloride cotransporter that functions in the amphid sheath glial cells to regulate thermotaxis behavior. By maintaining chloride homeostasis, negatively regulates guanylate cyclase gcy-8 in the thermosensory AFD neurons and thereby controls the microvilli receptive ending morphology of the AFD neurons and thermotaxis. Modulates the temperature-evoked neuronal activity of the AFD neurons such as calcium responses to temperature gradients. Might also play a role in the chemotaxis behavior mediated by the sensory neurons AWA and AWC. The polypeptide is Potassium/chloride cotransporter 3 (kcc-3) (Caenorhabditis elegans).